A 260-amino-acid chain; its full sequence is PHD finger protein ALFIN-LIKE 5 (260 aa).

Position 1 is an N-acetylmethionine (Met1). A disordered region spans residues 142 to 203 (AEKQTKEMPS…EEDEDEDEHG (62 aa)). Over residues 148–165 (EMPSSANQNGNRSKSNSK) the composition is skewed to polar residues. The span at 167–181 (RGLESKSSKTIHAKD) shows a compositional bias: basic and acidic residues. The segment covering 182–202 (EEEGLELEEGEEEEDEDEDEH) has biased composition (acidic residues). A PHD-type zinc finger spans residues 204–256 (ETLCGACGDNYASDEFWICCDMCEKWFHGECVKITPARAEHIKHYKCPTCSNK).

It belongs to the Alfin family. As to quaternary structure, interacts with H3K4me3 and to a lesser extent with H3K4me2. As to expression, ubiquitously expressed.

The protein resides in the nucleus. Its function is as follows. Histone-binding component that specifically recognizes H3 tails trimethylated on 'Lys-4' (H3K4me3), which mark transcription start sites of virtually all active genes. The protein is PHD finger protein ALFIN-LIKE 5 (AL5) of Arabidopsis thaliana (Mouse-ear cress).